Here is a 121-residue protein sequence, read N- to C-terminus: Large ribosomal subunit protein bL12 (121 aa).

This sequence belongs to the bacterial ribosomal protein bL12 family. As to quaternary structure, homodimer. Part of the ribosomal stalk of the 50S ribosomal subunit. Forms a multimeric L10(L12)X complex, where L10 forms an elongated spine to which 2 to 4 L12 dimers bind in a sequential fashion. Binds GTP-bound translation factors.

In terms of biological role, forms part of the ribosomal stalk which helps the ribosome interact with GTP-bound translation factors. Is thus essential for accurate translation. In Pediococcus pentosaceus (strain ATCC 25745 / CCUG 21536 / LMG 10740 / 183-1w), this protein is Large ribosomal subunit protein bL12.